Reading from the N-terminus, the 359-residue chain is Biotin synthase (359 aa).

The segment at 1–23 (MSVADSSAADSVAAPDTADTSSS) is disordered. Residues 76–302 (YFGNTVQLYF…VNPDRELRIA (227 aa)) form the Radical SAM core domain. Residues C94, C98, and C101 each contribute to the [4Fe-4S] cluster site. C138, C170, C230, and R300 together coordinate [2Fe-2S] cluster.

This sequence belongs to the radical SAM superfamily. Biotin synthase family. As to quaternary structure, homodimer. [4Fe-4S] cluster is required as a cofactor. Requires [2Fe-2S] cluster as cofactor.

It catalyses the reaction (4R,5S)-dethiobiotin + (sulfur carrier)-SH + 2 reduced [2Fe-2S]-[ferredoxin] + 2 S-adenosyl-L-methionine = (sulfur carrier)-H + biotin + 2 5'-deoxyadenosine + 2 L-methionine + 2 oxidized [2Fe-2S]-[ferredoxin]. Its pathway is cofactor biosynthesis; biotin biosynthesis; biotin from 7,8-diaminononanoate: step 2/2. Catalyzes the conversion of dethiobiotin (DTB) to biotin by the insertion of a sulfur atom into dethiobiotin via a radical-based mechanism. This chain is Biotin synthase, found in Rhodopirellula baltica (strain DSM 10527 / NCIMB 13988 / SH1).